A 461-amino-acid polypeptide reads, in one-letter code: Bifunctional protein GlmU (461 aa).

A pyrophosphorylase region spans residues 1-232; sequence MNLQIIILAA…SFEVQGINNR (232 aa). UDP-N-acetyl-alpha-D-glucosamine is bound by residues 8 to 11, Lys22, Gln73, and 78 to 79; these read LAAG and GT. Residue Asp102 participates in Mg(2+) binding. 3 residues coordinate UDP-N-acetyl-alpha-D-glucosamine: Gly142, Glu157, and Asn230. Residue Asn230 participates in Mg(2+) binding. Positions 233-253 are linker; that stretch reads QQLQQLERTWQQRAANQLMEK. The interval 254–461 is N-acetyltransferase; that stretch reads GATLADANRF…WKRPVKRERD (208 aa). Residues Arg336 and Lys354 each coordinate UDP-N-acetyl-alpha-D-glucosamine. His366 functions as the Proton acceptor in the catalytic mechanism. 2 residues coordinate UDP-N-acetyl-alpha-D-glucosamine: Tyr369 and Asn380. Residues Ala383, 389–390, Ser408, and Ala426 contribute to the acetyl-CoA site; that span reads NY.

This sequence in the N-terminal section; belongs to the N-acetylglucosamine-1-phosphate uridyltransferase family. It in the C-terminal section; belongs to the transferase hexapeptide repeat family. Homotrimer. The cofactor is Mg(2+).

It is found in the cytoplasm. The enzyme catalyses alpha-D-glucosamine 1-phosphate + acetyl-CoA = N-acetyl-alpha-D-glucosamine 1-phosphate + CoA + H(+). It catalyses the reaction N-acetyl-alpha-D-glucosamine 1-phosphate + UTP + H(+) = UDP-N-acetyl-alpha-D-glucosamine + diphosphate. It participates in nucleotide-sugar biosynthesis; UDP-N-acetyl-alpha-D-glucosamine biosynthesis; N-acetyl-alpha-D-glucosamine 1-phosphate from alpha-D-glucosamine 6-phosphate (route II): step 2/2. Its pathway is nucleotide-sugar biosynthesis; UDP-N-acetyl-alpha-D-glucosamine biosynthesis; UDP-N-acetyl-alpha-D-glucosamine from N-acetyl-alpha-D-glucosamine 1-phosphate: step 1/1. It functions in the pathway bacterial outer membrane biogenesis; LPS lipid A biosynthesis. Functionally, catalyzes the last two sequential reactions in the de novo biosynthetic pathway for UDP-N-acetylglucosamine (UDP-GlcNAc). The C-terminal domain catalyzes the transfer of acetyl group from acetyl coenzyme A to glucosamine-1-phosphate (GlcN-1-P) to produce N-acetylglucosamine-1-phosphate (GlcNAc-1-P), which is converted into UDP-GlcNAc by the transfer of uridine 5-monophosphate (from uridine 5-triphosphate), a reaction catalyzed by the N-terminal domain. The sequence is that of Bifunctional protein GlmU from Legionella pneumophila (strain Paris).